The chain runs to 227 residues: Isopentenyl-diphosphate Delta-isomerase 1 (227 aa).

K36 contacts substrate. Mg(2+) is bound by residues H40 and H51. Residues 49–199 (LLHRAFSVFL…EIKITPWFQI (151 aa)) enclose the Nudix hydrolase domain. Substrate is bound by residues R70 and K74. Catalysis depends on C86, which acts as the Proton acceptor. Substrate is bound at residue S87. The Mg(2+) site is built by E146 and E148. E148 is an active-site residue. Position 176 is an N6-acetyllysine (K176).

The protein belongs to the IPP isomerase type 1 family. Monomer. The cofactor is Mg(2+).

The protein resides in the peroxisome. It carries out the reaction isopentenyl diphosphate = dimethylallyl diphosphate. It participates in isoprenoid biosynthesis; dimethylallyl diphosphate biosynthesis; dimethylallyl diphosphate from isopentenyl diphosphate: step 1/1. Functionally, catalyzes the 1,3-allylic rearrangement of the homoallylic substrate isopentenyl (IPP) to its highly electrophilic allylic isomer, dimethylallyl diphosphate (DMAPP). This is Isopentenyl-diphosphate Delta-isomerase 1 (IDI1) from Bos taurus (Bovine).